The sequence spans 313 residues: Ribosomal RNA small subunit methyltransferase H (313 aa).

S-adenosyl-L-methionine-binding positions include 34-36, Asp-53, Phe-80, Asp-101, and Gln-108; that span reads GGH.

This sequence belongs to the methyltransferase superfamily. RsmH family.

It localises to the cytoplasm. The catalysed reaction is cytidine(1402) in 16S rRNA + S-adenosyl-L-methionine = N(4)-methylcytidine(1402) in 16S rRNA + S-adenosyl-L-homocysteine + H(+). Functionally, specifically methylates the N4 position of cytidine in position 1402 (C1402) of 16S rRNA. This Lacticaseibacillus casei (strain BL23) (Lactobacillus casei) protein is Ribosomal RNA small subunit methyltransferase H.